Consider the following 250-residue polypeptide: 5-oxoprolinase subunit A (250 aa).

The protein belongs to the LamB/PxpA family. Forms a complex composed of PxpA, PxpB and PxpC.

It carries out the reaction 5-oxo-L-proline + ATP + 2 H2O = L-glutamate + ADP + phosphate + H(+). In terms of biological role, catalyzes the cleavage of 5-oxoproline to form L-glutamate coupled to the hydrolysis of ATP to ADP and inorganic phosphate. The chain is 5-oxoprolinase subunit A from Streptomyces avermitilis (strain ATCC 31267 / DSM 46492 / JCM 5070 / NBRC 14893 / NCIMB 12804 / NRRL 8165 / MA-4680).